Here is a 192-residue protein sequence, read N- to C-terminus: Thymidine kinase (192 aa).

Residues 9-16 (SAMNAGKS) and 87-90 (DECQ) each bind ATP. Catalysis depends on Glu-88, which acts as the Proton acceptor. Residues Cys-145, Cys-147, Cys-182, and His-185 each contribute to the Zn(2+) site.

The protein belongs to the thymidine kinase family. In terms of assembly, homotetramer.

It is found in the cytoplasm. The enzyme catalyses thymidine + ATP = dTMP + ADP + H(+). This chain is Thymidine kinase, found in Vibrio vulnificus (strain CMCP6).